The following is a 227-amino-acid chain: Protein GET1 (227 aa).

The Lumenal portion of the chain corresponds to 1–3; that stretch reads MSL. A helical transmembrane segment spans residues 4 to 23; that stretch reads LLTVFLIVFVTQLISWIGQN. The Cytoplasmic portion of the chain corresponds to 24-107; that stretch reads VLLEWAYNLY…SFSTKFNAVI (84 aa). A coiled-coil region spans residues 72–96; sequence AKLRRSVDKGLAELEKLNSEIATAK. The helical transmembrane segment at 108–128 threads the bilayer; it reads WALTSGVNLVIGWWYGRKAVF. Topologically, residues 129–151 are lumenal; sequence YLPEGWMGPLTWWFSFPFAPRGS. Residues 152-168 form a helical membrane-spanning segment; that stretch reads VSVGVWSFACKRVLLVL. Topologically, residues 169-227 are cytoplasmic; that stretch reads ERMVKELFFAETQAKEVPVGFSPSSSSSSTPNPMSKASSGSPSPRRRTTVTVESEDEKS. Residues 184–227 are disordered; the sequence is EVPVGFSPSSSSSSTPNPMSKASSGSPSPRRRTTVTVESEDEKS. A compositionally biased stretch (low complexity) spans 190–211; that stretch reads SPSSSSSSTPNPMSKASSGSPS.

The protein belongs to the WRB/GET1 family. As to quaternary structure, interacts with GET3.

Its subcellular location is the endoplasmic reticulum membrane. Its function is as follows. Required for the post-translational delivery of tail-anchored (TA) proteins to the endoplasmic reticulum. Acts as a membrane receptor for soluble GET3, which recognizes and selectively binds the transmembrane domain of TA proteins in the cytosol. The chain is Protein GET1 from Coprinopsis cinerea (strain Okayama-7 / 130 / ATCC MYA-4618 / FGSC 9003) (Inky cap fungus).